A 235-amino-acid chain; its full sequence is Carboxy-S-adenosyl-L-methionine synthase (235 aa).

Residues Tyr35, 60 to 62 (GCS), 83 to 84 (DN), Asn124, and Arg191 each bind S-adenosyl-L-methionine.

It belongs to the class I-like SAM-binding methyltransferase superfamily. Cx-SAM synthase family. In terms of assembly, homodimer.

It catalyses the reaction prephenate + S-adenosyl-L-methionine = carboxy-S-adenosyl-L-methionine + 3-phenylpyruvate + H2O. Catalyzes the conversion of S-adenosyl-L-methionine (SAM) to carboxy-S-adenosyl-L-methionine (Cx-SAM). The protein is Carboxy-S-adenosyl-L-methionine synthase of Campylobacter jejuni subsp. jejuni serotype O:23/36 (strain 81-176).